A 354-amino-acid chain; its full sequence is Uroporphyrinogen decarboxylase (354 aa).

Substrate-binding positions include 27–31 (RQAGR), Asp-77, Tyr-154, Thr-209, and His-327.

It belongs to the uroporphyrinogen decarboxylase family. Homodimer.

It localises to the cytoplasm. It catalyses the reaction uroporphyrinogen III + 4 H(+) = coproporphyrinogen III + 4 CO2. Its pathway is porphyrin-containing compound metabolism; protoporphyrin-IX biosynthesis; coproporphyrinogen-III from 5-aminolevulinate: step 4/4. In terms of biological role, catalyzes the decarboxylation of four acetate groups of uroporphyrinogen-III to yield coproporphyrinogen-III. This Mannheimia succiniciproducens (strain KCTC 0769BP / MBEL55E) protein is Uroporphyrinogen decarboxylase.